The following is an 82-amino-acid chain: Envelope small membrane protein (82 aa).

The Virion surface segment spans residues 1–19; the sequence is MTFPRAFTIIDDHGMVVSV. The chain crosses the membrane as a helical span at residues 20–40; that stretch reads FFWLLLIIILILFSIALLNVI. Over 41 to 82 the chain is Intravirion; it reads KLCMVCCNLGKTIIVLPARHAYDAYKTFMQTKAYNPDEAFLV.

Belongs to the alphacoronaviruses E protein family. In terms of assembly, homopentamer. Interacts with membrane protein M in the budding compartment of the host cell, which is located between endoplasmic reticulum and the Golgi complex. Interacts with Nucleoprotein.

The protein localises to the host Golgi apparatus membrane. In terms of biological role, plays a central role in virus morphogenesis and assembly. Acts as a viroporin and self-assembles in host membranes forming pentameric protein-lipid pores that allow ion transport. Also plays a role in the induction of apoptosis. The protein is Envelope small membrane protein of Feline coronavirus (strain FIPV WSU-79/1146) (FCoV).